The following is a 587-amino-acid chain: Aspartate--tRNA ligase (587 aa).

Glutamate 174 is a binding site for L-aspartate. The interval 198–201 (QITK) is aspartate. Arginine 220 is a binding site for L-aspartate. ATP contacts are provided by residues 220–222 (RDE) and glutamine 229. Histidine 443 contributes to the L-aspartate binding site. Residue glutamate 477 participates in ATP binding. Arginine 484 lines the L-aspartate pocket. 529 to 532 (GLDR) is an ATP binding site.

Belongs to the class-II aminoacyl-tRNA synthetase family. Type 1 subfamily. As to quaternary structure, homodimer.

The protein localises to the cytoplasm. The catalysed reaction is tRNA(Asp) + L-aspartate + ATP = L-aspartyl-tRNA(Asp) + AMP + diphosphate. Its function is as follows. Catalyzes the attachment of L-aspartate to tRNA(Asp) in a two-step reaction: L-aspartate is first activated by ATP to form Asp-AMP and then transferred to the acceptor end of tRNA(Asp). The sequence is that of Aspartate--tRNA ligase from Streptococcus pneumoniae serotype 2 (strain D39 / NCTC 7466).